We begin with the raw amino-acid sequence, 146 residues long: Snaclec 5 (146 aa).

The N-terminal stretch at 1–23 (MGRFIFISFGLLVVFLSLSGTEA) is a signal peptide. Cystine bridges form between Cys25-Cys36, Cys53-Cys142, and Cys119-Cys134. Residues 32–143 (YEGHCYRVFD…CRNYGHFVCK (112 aa)) enclose the C-type lectin domain.

The protein belongs to the snaclec family. Heterodimer; disulfide-linked. In terms of tissue distribution, expressed by the venom gland.

It localises to the secreted. Functionally, interferes with one step of hemostasis (modulation of platelet aggregation, or coagulation cascade, for example). The protein is Snaclec 5 of Echis pyramidum leakeyi (Leakey's carpet viper).